Consider the following 805-residue polypeptide: Arginine/serine-rich protein PNISR (805 aa).

The span at 75-88 (NNHGNFQGDSNFNR) shows a compositional bias: polar residues. Disordered stretches follow at residues 75-331 (NNHG…EEKE) and 382-805 (LTGL…SRSR). 2 stretches are compositionally biased toward pro residues: residues 100-115 (PPHPPPEQPWMPPAPG) and 183-194 (YWQPGPPGPPAP). Over residues 197-210 (NRRERPPSFRDRQR) the composition is skewed to basic and acidic residues. Phosphoserine is present on residues serine 204 and serine 211. Lysine 218 participates in a covalent cross-link: Glycyl lysine isopeptide (Lys-Gly) (interchain with G-Cter in SUMO2). Positions 237-276 (REGLEKMEREKQKKLEKERMEQQRSQLSKKEKKATEDAEG) form a coiled coil. Positions 238-258 (EGLEKMEREKQKKLEKERMEQ) are enriched in basic and acidic residues. Phosphoserine is present on residues serine 290, serine 304, serine 313, and serine 321. Positions 290–299 (SDEEDEDAEN) are enriched in acidic residues. The segment covering 384 to 393 (GLGGLGGYGS) has biased composition (gly residues). Residues 421 to 463 (QKQEAFWRKEKEQQLLQDKQIEEEKQQTERVTKEMNEFIHREQ) show a composition bias toward basic and acidic residues. A coiled-coil region spans residues 427-461 (WRKEKEQQLLQDKQIEEEKQQTERVTKEMNEFIHR). Serine 465 and serine 467 each carry phosphoserine. Composition is skewed to basic and acidic residues over residues 473 to 486 (EADRDAVNDKKRTP) and 494 to 508 (EPKREHKGKEKERGS). Threonine 485 carries the phosphothreonine modification. Lysine 496 participates in a covalent cross-link: Glycyl lysine isopeptide (Lys-Gly) (interchain with G-Cter in SUMO2). Residues 509–550 (RSGSSSSGSSSSGSRTSSSSSSVSSSSYSSSSGSSCTSSRSS) are compositionally biased toward low complexity. Basic residues-rich tracts occupy residues 551-560 (SPKRRKRPSR), 567-579 (KARRSRSRSYSRR), 587-598 (TRGKLRDRRRSN), and 607-639 (RRNRSPSRDRRRSRSRSRDRRTNRSSRSRSRDR). Basic and acidic residues predominate over residues 659-721 (EAKEQDRKKE…KRKRESERTF (63 aa)). Lysine 703 is covalently cross-linked (Glycyl lysine isopeptide (Lys-Gly) (interchain with G-Cter in SUMO2)). Phosphoserine is present on serine 726. Basic and acidic residues predominate over residues 732–753 (IRHDSRQDSKKNATKDSKRHSG). The span at 754–767 (SDSSGRSSSESPGS) shows a compositional bias: low complexity. Basic residues-rich tracts occupy residues 771 to 781 (KKAKKPKHSRS) and 789 to 805 (RSGKKASRKHKSKSRSR).

It belongs to the splicing factor SR family. As to quaternary structure, interacts with PNN.

The protein localises to the nucleus speckle. The protein is Arginine/serine-rich protein PNISR (Pnisr) of Mus musculus (Mouse).